The chain runs to 377 residues: Adaptive-response sensory kinase SasA (377 aa).

Residues 154–373 (MLVHDLRSPL…SFHFTLPVYR (220 aa)) form the Histidine kinase domain. Residue His-157 is modified to Phosphohistidine; by autocatalysis.

Homooligomerizes. Interacts with KaiC. Participates in the KaiABC clock complex, whose core is composed of a KaiC homohexamer, 6 KaiB and up to 6 KaiA dimers. SasA and KaiB(fs) compete to bind to KaiC.

It catalyses the reaction ATP + protein L-histidine = ADP + protein N-phospho-L-histidine.. Functionally, member of the two-component regulatory system SasA/RpaA involved in genome-wide circadian gene expression. One of several clock output pathways. Participates in the Kai clock protein complex, the main circadian regulator in cyanobacteria, via its interaction with KaiC. KaiC enhances the autophosphorylation activity of SasA, which then transfers its phosphate group to RpaA to activate it. In addition to its output function, recruits fold-shifted KaiB (KaiB(fs)) to KaiC to cooperatively form the KaiB(6):KaiC(6) complex (independent of SasA kinase activity). Required for robustness of the circadian rhythm of gene expression and is involved in clock output, also required for adaptation to light/dark cycles. This Synechococcus sp. (strain JA-3-3Ab) (Cyanobacteria bacterium Yellowstone A-Prime) protein is Adaptive-response sensory kinase SasA.